A 551-amino-acid polypeptide reads, in one-letter code: MKANHIRILLLVTIAIMFISLMGKWEQTFPADNTKQQTSATQNNSHYDNADSSTNTDVTITDAKSSLAKETNFSKYDNAKSITINTVVFKDVKVSLLDGAIISASLKDYSISLDDKTPMSLLTDKSGSEYIAKSTIVVNKQPISVNFEDQGIKIENSKQILTLTGSADGLQITRTYTFDDTKYNISVSQNIKNTTSAPVNVIVDDSFARDFDPAGDSFSLLNAHSYTFTGVAYSTAKDSFRKESFKDISKTNGQPTVINSDGQGWVAFLQHYFVSAWIPQSTNAKIYYKNLNGDVFEAGAFTGATIAPNQSENISSILYTGPIIKANLVDLAPNLEKTLDYGMLSFFSEIIFWVMNHIHSLVGNWGLAIILVTCLIKLIFYPLSAKSYRSMAKMRMLQPRIKRLQETYKDDRQALGKKMMELYKEEKVNPLSGCLPMLIQIPIFISLYWVLLESVELRQAPFIFWIHDLSMKDPYFVLPVLMGLSMFLQQKLSPAPADPMQAKVMMFLPVIFTFLFASFPSGLVLYWLTNNLISISQQWIITRHYQATHKK.

Residues 3–23 (ANHIRILLLVTIAIMFISLMG) form a helical membrane-spanning segment. Residues 33 to 55 (NTKQQTSATQNNSHYDNADSSTN) are disordered. A run of 3 helical transmembrane segments spans residues 361-381 (LVGNWGLAIILVTCLIKLIFY), 431-451 (LSGCLPMLIQIPIFISLYWVL), and 504-524 (VMMFLPVIFTFLFASFPSGLV).

Belongs to the OXA1/ALB3/YidC family. Type 1 subfamily. As to quaternary structure, interacts with the Sec translocase complex via SecD. Specifically interacts with transmembrane segments of nascent integral membrane proteins during membrane integration.

It is found in the cell inner membrane. Required for the insertion and/or proper folding and/or complex formation of integral membrane proteins into the membrane. Involved in integration of membrane proteins that insert both dependently and independently of the Sec translocase complex, as well as at least some lipoproteins. Aids folding of multispanning membrane proteins. This Francisella tularensis subsp. holarctica (strain OSU18) protein is Membrane protein insertase YidC.